The following is a 2118-amino-acid chain: Cilia- and flagella-associated protein 65 (2118 aa).

A helical membrane pass occupies residues Gly6 to Val26. In terms of domain architecture, MSP spans Phe615–Pro736. 3 disordered regions span residues Ala1007 to Gly1029, Ser1764 to Ala1909, and Ala1924 to Arg1958. Over residues Gly1825 to Asp1834 the composition is skewed to gly residues. The segment covering Arg1840 to Ala1849 has biased composition (low complexity). A compositionally biased stretch (basic residues) spans Ala1850 to His1859. Composition is skewed to low complexity over residues Ser1892–Ala1902 and Pro1936–Pro1949. A coiled-coil region spans residues Ala2016–Glu2045.

It belongs to the CFAP65 family.

It is found in the cell projection. Its subcellular location is the cilium. The protein resides in the flagellum membrane. It localises to the cytoplasm. Functionally, may play a role in flagellar formation and mobility. The chain is Cilia- and flagella-associated protein 65 from Chlamydomonas reinhardtii (Chlamydomonas smithii).